The sequence spans 638 residues: Nitrous-oxide reductase (638 aa).

The segment at residues Met1 to Ala52 is a signal peptide (tat-type signal). His129, His130, and His178 together coordinate Cu cation. Tyr256, Glu259, Met267, Asp273, and Asn324 together coordinate Ca(2+). Residues His326, His382, and His433 each contribute to the Cu cation site. Ca(2+) is bound by residues Lys454 and Glu469. Cu cation is bound by residues His494, His583, Cys618, Trp620, Cys622, His626, and Met629. The segment at Asn542–Ala638 is COX2-like.

The protein belongs to the NosZ family. This sequence in the C-terminal section; belongs to the cytochrome c oxidase subunit 2 family. In terms of assembly, homodimer. Ca(2+) is required as a cofactor. The cofactor is Cu cation. In terms of processing, predicted to be exported by the Tat system. The position of the signal peptide cleavage has not been experimentally proven. The N-terminus is blocked.

The protein resides in the periplasm. The catalysed reaction is N2 + 2 Fe(III)-[cytochrome c] + H2O = nitrous oxide + 2 Fe(II)-[cytochrome c] + 2 H(+). Its pathway is nitrogen metabolism; nitrate reduction (denitrification); dinitrogen from nitrate: step 4/4. Nitrous-oxide reductase is part of a bacterial respiratory system which is activated under anaerobic conditions in the presence of nitrate or nitrous oxide. The protein is Nitrous-oxide reductase (nosZ) of Stutzerimonas stutzeri (Pseudomonas stutzeri).